Here is a 318-residue protein sequence, read N- to C-terminus: Gamma-glutamyl hydrolase (318 aa).

The N-terminal stretch at 1–24 (MASPGCLLCVLGLLLCGAASLELS) is a signal peptide. The Gamma-glutamyl hydrolase domain maps to 25–318 (RPHGDTAKKP…SSFQQCYIFD (294 aa)). Residue asparagine 116 is glycosylated (N-linked (GlcNAc...) asparagine). Cysteine 134 (nucleophile) is an active-site residue. 2 N-linked (GlcNAc...) asparagine glycosylation sites follow: asparagine 163 and asparagine 203. The Proton donor role is filled by histidine 244. Asparagine 307 carries N-linked (GlcNAc...) asparagine; partial glycosylation.

Belongs to the peptidase C26 family. Homodimer.

Its subcellular location is the secreted. The protein localises to the extracellular space. The protein resides in the lysosome. It is found in the melanosome. The catalysed reaction is (6S)-5,6,7,8-tetrahydrofolyl-(gamma-L-Glu)(n) + (n-1) H2O = (6S)-5,6,7,8-tetrahydrofolate + (n-1) L-glutamate. Functionally, hydrolyzes the polyglutamate sidechains of pteroylpolyglutamates. Progressively removes gamma-glutamyl residues from pteroylpoly-gamma-glutamate to yield pteroyl-alpha-glutamate (folic acid) and free glutamate. May play an important role in the bioavailability of dietary pteroylpolyglutamates and in the metabolism of pteroylpolyglutamates and antifolates. The sequence is that of Gamma-glutamyl hydrolase from Homo sapiens (Human).